Here is a 398-residue protein sequence, read N- to C-terminus: Succinate--CoA ligase [ADP-forming] subunit beta (398 aa).

The 245-residue stretch at 9 to 253 folds into the ATP-grasp domain; that stretch reads KEILASYGVR…IREENPIEVE (245 aa). Residues lysine 50, 57 to 59, valine 106, and glutamate 116 contribute to the ATP site; that span reads GRG. Asparagine 208 and aspartate 222 together coordinate Mg(2+). Residues asparagine 273 and 330 to 332 each bind substrate; that span reads GIV.

The protein belongs to the succinate/malate CoA ligase beta subunit family. In terms of assembly, heterotetramer of two alpha and two beta subunits. Mg(2+) serves as cofactor.

It catalyses the reaction succinate + ATP + CoA = succinyl-CoA + ADP + phosphate. The catalysed reaction is GTP + succinate + CoA = succinyl-CoA + GDP + phosphate. It participates in carbohydrate metabolism; tricarboxylic acid cycle; succinate from succinyl-CoA (ligase route): step 1/1. In terms of biological role, succinyl-CoA synthetase functions in the citric acid cycle (TCA), coupling the hydrolysis of succinyl-CoA to the synthesis of either ATP or GTP and thus represents the only step of substrate-level phosphorylation in the TCA. The beta subunit provides nucleotide specificity of the enzyme and binds the substrate succinate, while the binding sites for coenzyme A and phosphate are found in the alpha subunit. The polypeptide is Succinate--CoA ligase [ADP-forming] subunit beta (Flavobacterium psychrophilum (strain ATCC 49511 / DSM 21280 / CIP 103535 / JIP02/86)).